The primary structure comprises 689 residues: DNA ligase (689 aa).

Residues aspartate 40 to aspartate 44, serine 89 to leucine 90, and glutamate 121 each bind NAD(+). Lysine 123 functions as the N6-AMP-lysine intermediate in the catalytic mechanism. Arginine 144, glutamate 179, lysine 295, and lysine 319 together coordinate NAD(+). The Zn(2+) site is built by cysteine 413, cysteine 416, cysteine 431, and cysteine 437. Positions arginine 610–alanine 689 constitute a BRCT domain.

The protein belongs to the NAD-dependent DNA ligase family. LigA subfamily. The cofactor is Mg(2+). It depends on Mn(2+) as a cofactor.

It carries out the reaction NAD(+) + (deoxyribonucleotide)n-3'-hydroxyl + 5'-phospho-(deoxyribonucleotide)m = (deoxyribonucleotide)n+m + AMP + beta-nicotinamide D-nucleotide.. Functionally, DNA ligase that catalyzes the formation of phosphodiester linkages between 5'-phosphoryl and 3'-hydroxyl groups in double-stranded DNA using NAD as a coenzyme and as the energy source for the reaction. It is essential for DNA replication and repair of damaged DNA. The chain is DNA ligase from Rickettsia akari (strain Hartford).